Here is an 89-residue protein sequence, read N- to C-terminus: DNA-directed RNA polymerase subunit omega (89 aa).

This sequence belongs to the RNA polymerase subunit omega family. The RNAP catalytic core consists of 2 alpha, 1 beta, 1 beta' and 1 omega subunit. When a sigma factor is associated with the core the holoenzyme is formed, which can initiate transcription.

The catalysed reaction is RNA(n) + a ribonucleoside 5'-triphosphate = RNA(n+1) + diphosphate. Functionally, promotes RNA polymerase assembly. Latches the N- and C-terminal regions of the beta' subunit thereby facilitating its interaction with the beta and alpha subunits. The protein is DNA-directed RNA polymerase subunit omega (rpoZ) of Pasteurella multocida (strain Pm70).